The sequence spans 99 residues: Large ribosomal subunit protein uL23 (99 aa).

It belongs to the universal ribosomal protein uL23 family. Part of the 50S ribosomal subunit. Contacts protein L29, and trigger factor when it is bound to the ribosome.

One of the early assembly proteins it binds 23S rRNA. One of the proteins that surrounds the polypeptide exit tunnel on the outside of the ribosome. Forms the main docking site for trigger factor binding to the ribosome. This Synechococcus sp. (strain JA-2-3B'a(2-13)) (Cyanobacteria bacterium Yellowstone B-Prime) protein is Large ribosomal subunit protein uL23.